We begin with the raw amino-acid sequence, 509 residues long: MQSWSRVYCSLAKKGHFNRLSHGLQGASSVPLRTYSDQPIDADVTVIGSGPGGYVAAIKAAQLGFKTVCIEKNETLGGTCLNVGCIPSKALLNNSHYYHLAHGKDFASRGIEIPEVRLNLEKMMEQKRSAVKALTGGIAHLFKQNKVVHVNGFGKITGKNQVTATTADGSTQVIGTKNILIATGSEVTPFPGITIDEDTIVSSTGALSLKKVPEKLVVIGAGVIGVELGSVWQRLGADVTAVEFLGHVGGIGIDMEISKNFQRILQKQGFKFKLNTKVTGATKKSDGKIDVSVEAASGGKAEVITCDVLLVCIGRRPFTQNLGLEELGIELDPKGRIPVNTRFQTKIPNIFAIGDVVAGPMLAHKAEDEGIICVEGMAGGAVHIDYNCVPSVIYTHPEVAWVGKSEEQLKEEGVEFKVGKFPFAANSRAKTNADTDGMVKILGHKSTDRILGAHILGPGAGEMVNEAALALEYGASCEDVARVCHAHPTLSEAFREANLAASFGKPINF.

A mitochondrion-targeting transit peptide spans 1 to 35 (MQSWSRVYCSLAKKGHFNRLSHGLQGASSVPLRTY). Position 66 is an N6-acetyllysine; alternate (lysine 66). At lysine 66 the chain carries N6-succinyllysine; alternate. FAD-binding positions include 71–80 (EKNETLGGTC) and lysine 89. The cysteines at positions 80 and 85 are disulfide-linked. Residues lysine 104, lysine 122, lysine 132, and lysine 143 each carry the N6-acetyllysine; alternate modification. Residues lysine 104, lysine 122, lysine 132, and lysine 143 each carry the N6-succinyllysine; alternate modification. Glycine 154 contacts FAD. Lysine 159 bears the N6-succinyllysine mark. Residue 183–185 (TGS) participates in FAD binding. NAD(+)-binding positions include 220-227 (GAGVIGVE) and glutamate 243. An N6-succinyllysine mark is found at lysine 273 and lysine 277. Valine 278 serves as a coordination point for NAD(+). A phosphoserine mark is found at serine 285 and serine 297. NAD(+) is bound at residue glycine 314. Lysine 346 bears the N6-acetyllysine mark. FAD is bound by residues aspartate 355 and 361-364 (MLAH). An N6-acetyllysine; alternate modification is found at lysine 410. An N6-succinyllysine; alternate modification is found at lysine 410. Residues lysine 417 and lysine 420 each carry the N6-acetyllysine modification. Residue lysine 430 is modified to N6-succinyllysine. Histidine 487 acts as the Proton acceptor in catalysis. Phosphoserine is present on serine 502. Lysine 505 carries the N6-acetyllysine; alternate modification. At lysine 505 the chain carries N6-succinyllysine; alternate.

The protein belongs to the class-I pyridine nucleotide-disulfide oxidoreductase family. In terms of assembly, homodimer. Part of the multimeric pyruvate dehydrogenase complex that contains multiple copies of pyruvate dehydrogenase (subunits PDHA (PDHA1 or PDHA2) and PDHB, E1), dihydrolipoamide acetyltransferase (DLAT, E2) and lipoamide dehydrogenase (DLD, E3). These subunits are bound to an inner core composed of about 48 DLAT and 12 PDHX molecules (by non covalent bonds). The 2-oxoglutarate dehydrogenase complex is composed of OGDH (2-oxoglutarate dehydrogenase; E1), DLST (dihydrolipoamide succinyltransferase; E2), DLD (dihydrolipoamide dehydrogenase; E3) and the assembly factor KGD4. It contains multiple copies of the three enzymatic components (E1, E2 and E3). In the nucleus, the 2-oxoglutarate dehydrogenase complex associates with KAT2A. Interacts with PDHX. FAD is required as a cofactor. In terms of processing, tyrosine phosphorylated.

The protein localises to the mitochondrion matrix. Its subcellular location is the nucleus. The protein resides in the cell projection. It localises to the cilium. It is found in the flagellum. The protein localises to the cytoplasmic vesicle. Its subcellular location is the secretory vesicle. The protein resides in the acrosome. The catalysed reaction is N(6)-[(R)-dihydrolipoyl]-L-lysyl-[protein] + NAD(+) = N(6)-[(R)-lipoyl]-L-lysyl-[protein] + NADH + H(+). In terms of biological role, lipoamide dehydrogenase is a component of the glycine cleavage system as well as an E3 component of three alpha-ketoacid dehydrogenase complexes (pyruvate-, alpha-ketoglutarate-, and branched-chain amino acid-dehydrogenase complex). The 2-oxoglutarate dehydrogenase complex is mainly active in the mitochondrion. A fraction of the 2-oxoglutarate dehydrogenase complex also localizes in the nucleus and is required for lysine succinylation of histones: associates with KAT2A on chromatin and provides succinyl-CoA to histone succinyltransferase KAT2A. In monomeric form may have additional moonlighting function as serine protease. Involved in the hyperactivation of spermatazoa during capacitation and in the spermatazoal acrosome reaction. The protein is Dihydrolipoyl dehydrogenase, mitochondrial (Dld) of Rattus norvegicus (Rat).